The sequence spans 333 residues: 5-formaminoimidazole-4-carboxamide-1-(beta)-D-ribofuranosyl 5'-monophosphate synthetase (333 aa).

Histidine 10 and serine 70 together coordinate 5-amino-1-(5-phospho-beta-D-ribosyl)imidazole-4-carboxamide. In terms of domain architecture, ATP-grasp spans 91 to 324 (KEVLKWESDR…IAREIKIAIE (234 aa)). ATP contacts are provided by residues 121–181 (PDDI…VPIY) and glutamate 203. Asparagine 231 is a 5-amino-1-(5-phospho-beta-D-ribosyl)imidazole-4-carboxamide binding site. 2 residues coordinate Mg(2+): glutamate 269 and glutamate 282.

Belongs to the phosphohexose mutase family. Mg(2+) is required as a cofactor. It depends on Mn(2+) as a cofactor.

The catalysed reaction is 5-amino-1-(5-phospho-beta-D-ribosyl)imidazole-4-carboxamide + formate + ATP = 5-formamido-1-(5-phospho-D-ribosyl)imidazole-4-carboxamide + ADP + phosphate. The protein operates within purine metabolism; IMP biosynthesis via de novo pathway; 5-formamido-1-(5-phospho-D-ribosyl)imidazole-4-carboxamide from 5-amino-1-(5-phospho-D-ribosyl)imidazole-4-carboxamide (formate route): step 1/1. Functionally, catalyzes the ATP- and formate-dependent formylation of 5-aminoimidazole-4-carboxamide-1-beta-d-ribofuranosyl 5'-monophosphate (AICAR) to 5-formaminoimidazole-4-carboxamide-1-beta-d-ribofuranosyl 5'-monophosphate (FAICAR) in the absence of folates. This Pyrococcus horikoshii (strain ATCC 700860 / DSM 12428 / JCM 9974 / NBRC 100139 / OT-3) protein is 5-formaminoimidazole-4-carboxamide-1-(beta)-D-ribofuranosyl 5'-monophosphate synthetase.